The primary structure comprises 279 residues: 3-methyl-2-oxobutanoate hydroxymethyltransferase (279 aa).

2 residues coordinate Mg(2+): D43 and D82. Residues 43 to 44 (DS), D82, and K112 contribute to the 3-methyl-2-oxobutanoate site. E114 is a binding site for Mg(2+). The active-site Proton acceptor is the E181.

It belongs to the PanB family. Homodecamer; pentamer of dimers. The cofactor is Mg(2+).

The protein localises to the cytoplasm. It catalyses the reaction 3-methyl-2-oxobutanoate + (6R)-5,10-methylene-5,6,7,8-tetrahydrofolate + H2O = 2-dehydropantoate + (6S)-5,6,7,8-tetrahydrofolate. The protein operates within cofactor biosynthesis; (R)-pantothenate biosynthesis; (R)-pantoate from 3-methyl-2-oxobutanoate: step 1/2. Catalyzes the reversible reaction in which hydroxymethyl group from 5,10-methylenetetrahydrofolate is transferred onto alpha-ketoisovalerate to form ketopantoate. The polypeptide is 3-methyl-2-oxobutanoate hydroxymethyltransferase (Exiguobacterium sibiricum (strain DSM 17290 / CCUG 55495 / CIP 109462 / JCM 13490 / 255-15)).